Consider the following 367-residue polypeptide: Isocitrate dehydrogenase [NAD] regulatory subunit 1, mitochondrial (367 aa).

The N-terminal 25 residues, 1-25, are a transit peptide targeting the mitochondrion; sequence MSRRSLTLLKNLARNANGSGIQTRS.

It belongs to the isocitrate and isopropylmalate dehydrogenases family. In terms of assembly, heterooligomer of catalytic and regulatory subunits. Ubiquitous. Predominantly expressed in roots, stems and leaves.

It is found in the mitochondrion. In terms of biological role, performs an essential role in the oxidative function of the citric acid cycle. The protein is Isocitrate dehydrogenase [NAD] regulatory subunit 1, mitochondrial (IDH1) of Arabidopsis thaliana (Mouse-ear cress).